Consider the following 586-residue polypeptide: CTP synthase 2 (586 aa).

The Glutamine amidotransferase type-1 domain maps to 300–554; sequence SIALVGKYTK…LAATGTLNTH (255 aa). Residues Cys399, His526, and Glu528 each act as for GATase activity in the active site. Phosphoserine is present on residues Ser568, Ser571, and Ser574.

The protein belongs to the CTP synthase family.

It catalyses the reaction UTP + L-glutamine + ATP + H2O = CTP + L-glutamate + ADP + phosphate + 2 H(+). The protein operates within pyrimidine metabolism; CTP biosynthesis via de novo pathway; CTP from UDP: step 2/2. Its function is as follows. Catalyzes the ATP-dependent amination of UTP to CTP with either L-glutamine or ammonia as the source of nitrogen. Constitutes the rate-limiting enzyme in the synthesis of cytosine nucleotides. This chain is CTP synthase 2 (Ctps2), found in Rattus norvegicus (Rat).